The chain runs to 179 residues: Large ribosomal subunit protein uL6 (179 aa).

A compositionally biased stretch (basic and acidic residues) spans 154 to 169 (EPYKGKGVKYEHEQIR). The interval 154–179 (EPYKGKGVKYEHEQIRRKAGKSGGKK) is disordered. The span at 170-179 (RKAGKSGGKK) shows a compositional bias: basic residues.

It belongs to the universal ribosomal protein uL6 family. Part of the 50S ribosomal subunit.

In terms of biological role, this protein binds to the 23S rRNA, and is important in its secondary structure. It is located near the subunit interface in the base of the L7/L12 stalk, and near the tRNA binding site of the peptidyltransferase center. In Oleidesulfovibrio alaskensis (strain ATCC BAA-1058 / DSM 17464 / G20) (Desulfovibrio alaskensis), this protein is Large ribosomal subunit protein uL6.